The chain runs to 457 residues: LLLGAVAGSEVCYDRLGCFSDDSPWAGIVERPLKVLPWSPSTINTRFLLYTNESPNNYQIVTADSSTIRSSNFRTDRKTRFIIHGYIDKGEENWLANMCEALLQVESVNCICVDWKGGSRALYTQATQNIRVVGAEVAYFVDALQSQLGYSPSNVHIIGHSLGSHVAGEAGRRTNGNIGRITGLDPAEPCFQGTPELVRLDPSDAQFVDVIHTDGAPIIPNLGFGMSQTVGHLDFFPNGGVEMPGCQKNIISQIVDINGIWEGTRDFAACNHLRSYKYYIDSILNPTGFAGFSCSSYNTFSSNNCFPCASGGCPQMGHYADRFSGKTNELFQQFYLNTGDASNFSRWRYQIAVTLSGRKVTGHVLVSLYGSGGTSKQYEIYKGSLQPGTSYVNQIDSDVDVGDIEKVKFIWYNNIINPTLPKVGASSIQVTRNDGRVFNFCSQDTVREDILLTLTPC.

The first 7 residues, 1-7 (LLLGAVA), serve as a signal peptide directing secretion. Intrachain disulfides connect cysteine 12-cysteine 18 and cysteine 99-cysteine 110. The active-site Nucleophile is the serine 161. Aspartate 185 serves as the catalytic Charge relay system. Ca(2+) is bound by residues glutamate 196, arginine 199, aspartate 201, and aspartate 204. Cysteine 246 and cysteine 270 form a disulfide bridge. Residue histidine 272 is the Charge relay system of the active site. Intrachain disulfides connect cysteine 294-cysteine 305 and cysteine 308-cysteine 313. Residue asparagine 343 is glycosylated (N-linked (GlcNAc...) asparagine). The PLAT domain occupies 347-457 (WRYQIAVTLS…EDILLTLTPC (111 aa)). An intrachain disulfide couples cysteine 441 to cysteine 457.

This sequence belongs to the AB hydrolase superfamily. Lipase family. In terms of assembly, forms a 1:1 stoichiometric complex with (pro)colipase/CLPS.

It is found in the secreted. It carries out the reaction a triacylglycerol + H2O = a diacylglycerol + a fatty acid + H(+). It catalyses the reaction 1,2,3-tributanoylglycerol + H2O = dibutanoylglycerol + butanoate + H(+). The enzyme catalyses 1,2,3-tri-(9Z-octadecenoyl)-glycerol + H2O = di-(9Z)-octadecenoylglycerol + (9Z)-octadecenoate + H(+). The catalysed reaction is all-trans-retinyl hexadecanoate + H2O = all-trans-retinol + hexadecanoate + H(+). It carries out the reaction 1,2-di-(9Z-octadecenoyl)-glycerol + H2O = (9Z-octadecenoyl)-glycerol + (9Z)-octadecenoate + H(+). With respect to regulation, inhibited by bile salts, is reactivated by (pro)colipase/CLPS. Plays an important role in fat metabolism. It preferentially splits the esters of long-chain fatty acids at positions 1 and 3, producing mainly 2-monoacylglycerol and free fatty acids, and shows considerably higher activity against insoluble emulsified substrates than against soluble ones. The polypeptide is Pancreatic triacylglycerol lipase (PNLIP) (Myocastor coypus (Coypu)).